Consider the following 380-residue polypeptide: Probable cytosolic iron-sulfur protein assembly protein 1 (380 aa).

7 WD repeats span residues 10 to 49 (AHND…KFPL), 56 to 108 (THKR…VEYD), 135 to 175 (GHEN…EEFE), 182 to 221 (DHSQ…DEWS), 228 to 275 (GHEG…EEDK), 299 to 338 (VHKY…KWVI), and 346 to 380 (HGVH…LWNV).

The protein belongs to the WD repeat CIA1 family. In terms of assembly, interacts with NAR1.

It localises to the cytoplasm. The protein localises to the nucleus. Functionally, essential component of the cytosolic iron-sulfur (Fe/S) protein assembly machinery. Required for the maturation of extramitochondrial Fe/S proteins. In Candida dubliniensis (strain CD36 / ATCC MYA-646 / CBS 7987 / NCPF 3949 / NRRL Y-17841) (Yeast), this protein is Probable cytosolic iron-sulfur protein assembly protein 1.